Consider the following 296-residue polypeptide: MEQFRNIGIIGRLGSSQVLDTVRRLKRFLLDRHLHVILEDTIAEVLPGHGLQTSSRKMLGEVCDMVIVVGGDGSLLGAARALAKHNIPVLGINRGSLGFLTDIRPDELEIKVAEVLDGHYLVENRFLLQAEVRRHAEAIGQGDALNDVVLHPGKSTRMIEFELYIDGQFVCSQKADGLIVATPTGSTAYALSAGGPIMHPKLDAIVIVPMYPHTLSGRPIVVDGNSELKIVVSKDMQIYPQVSCDGQNHFTCAPGDTITVSKKAQKLRLIHPLDHNYYEVCRTKLGWGSKLGGGGD.

Aspartate 72 (proton acceptor) is an active-site residue. NAD(+)-binding positions include 72-73 (DG), 146-147 (ND), arginine 157, lysine 174, aspartate 176, 187-192 (TAYALS), and glutamine 247.

Belongs to the NAD kinase family. A divalent metal cation is required as a cofactor.

Its subcellular location is the cytoplasm. The catalysed reaction is NAD(+) + ATP = ADP + NADP(+) + H(+). Its function is as follows. Involved in the regulation of the intracellular balance of NAD and NADP, and is a key enzyme in the biosynthesis of NADP. Catalyzes specifically the phosphorylation on 2'-hydroxyl of the adenosine moiety of NAD to yield NADP. In Pseudomonas fluorescens (strain Pf0-1), this protein is NAD kinase.